A 68-amino-acid chain; its full sequence is 1-carboxybiuret hydrolase subunit AtzG (68 aa).

As to quaternary structure, heterotetramer consisting of 2 AtzE and 2 AtzG subunits.

The protein operates within xenobiotic degradation; atrazine degradation. Important for the activity of the AtzE subunit of 1-carboxybiuret hydrolase. The polypeptide is 1-carboxybiuret hydrolase subunit AtzG (Pseudomonas sp. (strain ADP)).